The sequence spans 1141 residues: IgM protease (1141 aa).

The first 32 residues, 1–32, serve as a signal peptide directing secretion; sequence MNIQERFSLRKSAVGLVSVSLLCAIYTSTVAA. Catalysis depends on Cys195, which acts as the Nucleophile. Disordered regions lie at residues 518–544, 725–749, 781–805, and 839–860; these read PDLP…STNL, EKDS…NVET, LEKD…TNVE, and EKDS…ESTS. A compositionally biased stretch (polar residues) spans 526–544; it reads STVSDVDSLSSQETSSTNL. Low complexity-rich tracts occupy residues 738–749 and 795–805; these read EPTSSESTNVET and EPTSSESTNVE. A helical membrane pass occupies residues 1119–1136; that stretch reads IMGVGLLTLVLGSALGLL.

Belongs to the peptidase C66 family.

The protein localises to the cell membrane. The protein resides in the secreted. Its activity is regulated as follows. IgM cleavage is inhibited by iodoacetamide but not by AEBSF, bestatin, E-64, Z-LVG-CHN(2), or EDTA. In terms of biological role, catalyzes the specific cleavage of porcine IgM bound to the bacterial surface. Can degrade only IgM but neither IgG nor IgA, and is host specific, as it exclusively cleaves porcine IgM but not IgM from six other species, including human, mouse and a closely related member of the Suidae family. Promotes survival in porcine blood. Is thus involved in a so-far-unknown mechanism of host-pathogen interaction at an early stage of the host immune response. The sequence is that of IgM protease (ide) from Streptococcus suis (strain P1/7).